Here is a 405-residue protein sequence, read N- to C-terminus: Coenzyme F420 hydrogenase subunit alpha (405 aa).

The Ni(2+) site is built by Cys63, Cys66, Cys380, and Cys383.

It belongs to the [NiFe]/[NiFeSe] hydrogenase large subunit family. In terms of assembly, heterocomplex of the form (alpha(1)beta(1)gamma(1))(8). The cofactor is Ni(2+). It depends on iron-sulfur cluster as a cofactor. FAD is required as a cofactor.

It catalyses the reaction oxidized coenzyme F420-(gamma-L-Glu)(n) + H2 + H(+) = reduced coenzyme F420-(gamma-L-Glu)(n). Functionally, reduces the physiological low-potential two-electron acceptor coenzyme F420, and the artificial one-electron acceptor methylviologen. The polypeptide is Coenzyme F420 hydrogenase subunit alpha (frhA) (Methanothermobacter thermautotrophicus (strain ATCC 29096 / DSM 1053 / JCM 10044 / NBRC 100330 / Delta H) (Methanobacterium thermoautotrophicum)).